We begin with the raw amino-acid sequence, 620 residues long: Translocator protein BipB (620 aa).

Residues 58–95 form a disordered region; it reads QCDAQPAAHDARLDDKPALRAPQERDAPPLGASDTGSR. A compositionally biased stretch (basic and acidic residues) spans 66-84; it reads HDARLDDKPALRAPQERDA. The stretch at 309–339 forms a coiled coil; the sequence is EMQAKREAELQKKSDEYQAQVKKAEEMQKTM. 3 helical membrane passes run 355–375, 401–421, and 430–450; these read FAAA…GLAL, AILK…LVAC, and LAGA…AAFV.

This sequence belongs to the SctE/SipB/YopB family.

It localises to the secreted. The protein resides in the host membrane. Functionally, plays a role in the bacterium-induced formation of multinucleated giant cell (MNGC), which is formed after host cell fusion, as well as in the intercellular spreading of bacteria and in the induction of apoptosis in macrophages. May act in concert with other effector proteins to induce fusion of host cell membranes. This is Translocator protein BipB (bipB) from Burkholderia pseudomallei (strain 1106a).